We begin with the raw amino-acid sequence, 166 residues long: Large ribosomal subunit protein uL10 (166 aa).

This sequence belongs to the universal ribosomal protein uL10 family. As to quaternary structure, part of the ribosomal stalk of the 50S ribosomal subunit. The N-terminus interacts with L11 and the large rRNA to form the base of the stalk. The C-terminus forms an elongated spine to which L12 dimers bind in a sequential fashion forming a multimeric L10(L12)X complex.

Its function is as follows. Forms part of the ribosomal stalk, playing a central role in the interaction of the ribosome with GTP-bound translation factors. This is Large ribosomal subunit protein uL10 from Pseudomonas fluorescens (strain SBW25).